Reading from the N-terminus, the 270-residue chain is F420 non-reducing hydrogenase II cytochrome subunit (270 aa).

Transmembrane regions (helical) follow at residues alanine 27–methionine 47, methionine 57–serine 77, isoleucine 139–tyrosine 159, tryptophan 173–leucine 193, and valine 195–leucine 215.

It belongs to the HupC/HyaC/HydC family. As to quaternary structure, composed of a large subunit (VhtA), a small subunit (VhtG) and a cytochrome subunit (VhtC). Requires heme b as cofactor.

The protein resides in the cell membrane. It carries out the reaction methanophenazine + H2 = dihydromethanophenazine. In terms of biological role, part of the F420 non-reducing hydrogenase II complex that catalyzes the reduction of methanophenazine to dihydromethanophenazine. This Methanosarcina mazei (strain ATCC BAA-159 / DSM 3647 / Goe1 / Go1 / JCM 11833 / OCM 88) (Methanosarcina frisia) protein is F420 non-reducing hydrogenase II cytochrome subunit.